Reading from the N-terminus, the 480-residue chain is Cytochrome b-c1 complex subunit 1, mitochondrial (480 aa).

The N-terminal 34 residues, 1 to 34 (MAASVVCRAATAGAQVLLRARRSPALLRTPALRS), are a transit peptide targeting the mitochondrion. An N6-acetyllysine mark is found at lysine 111 and lysine 138. An N6-acetyllysine; alternate modification is found at lysine 163. Residue lysine 163 is modified to N6-succinyllysine; alternate. Serine 212 is subject to Phosphoserine. Lysine 248 is subject to N6-acetyllysine.

This sequence belongs to the peptidase M16 family. UQCRC1/QCR1 subfamily. As to quaternary structure, component of the ubiquinol-cytochrome c oxidoreductase (cytochrome b-c1 complex, complex III, CIII), a multisubunit enzyme composed of 11 subunits. The complex is composed of 3 respiratory subunits cytochrome b, cytochrome c1 and Rieske protein UQCRFS1, 2 core protein subunits UQCRC1/QCR1 and UQCRC2/QCR2, and 6 low-molecular weight protein subunits UQCRH/QCR6, UQCRB/QCR7, UQCRQ/QCR8, UQCR10/QCR9, UQCR11/QCR10 and subunit 9, the cleavage product of Rieske protein UQCRFS1. The complex exists as an obligatory dimer and forms supercomplexes (SCs) in the inner mitochondrial membrane with NADH-ubiquinone oxidoreductase (complex I, CI) and cytochrome c oxidase (complex IV, CIV), resulting in different assemblies (supercomplex SCI(1)III(2)IV(1) and megacomplex MCI(2)III(2)IV(2)). Interacts with UQCC6. Interacts with STMP1. As to expression, expressed in brain, including substantia nigra, striatum, cortex and cerebellum, and in spinal cord, heart, kidney, liver and muscle.

Its subcellular location is the mitochondrion inner membrane. Its function is as follows. Component of the ubiquinol-cytochrome c oxidoreductase, a multisubunit transmembrane complex that is part of the mitochondrial electron transport chain which drives oxidative phosphorylation. The respiratory chain contains 3 multisubunit complexes succinate dehydrogenase (complex II, CII), ubiquinol-cytochrome c oxidoreductase (cytochrome b-c1 complex, complex III, CIII) and cytochrome c oxidase (complex IV, CIV), that cooperate to transfer electrons derived from NADH and succinate to molecular oxygen, creating an electrochemical gradient over the inner membrane that drives transmembrane transport and the ATP synthase. The cytochrome b-c1 complex catalyzes electron transfer from ubiquinol to cytochrome c, linking this redox reaction to translocation of protons across the mitochondrial inner membrane, with protons being carried across the membrane as hydrogens on the quinol. In the process called Q cycle, 2 protons are consumed from the matrix, 4 protons are released into the intermembrane space and 2 electrons are passed to cytochrome c. The 2 core subunits UQCRC1/QCR1 and UQCRC2/QCR2 are homologous to the 2 mitochondrial-processing peptidase (MPP) subunits beta-MPP and alpha-MPP respectively, and they seem to have preserved their MPP processing properties. May be involved in the in situ processing of UQCRFS1 into the mature Rieske protein and its mitochondrial targeting sequence (MTS)/subunit 9 when incorporated into complex III. Seems to play an important role in the maintenance of proper mitochondrial function in nigral dopaminergic neurons. This chain is Cytochrome b-c1 complex subunit 1, mitochondrial (UQCRC1), found in Homo sapiens (Human).